We begin with the raw amino-acid sequence, 532 residues long: ATP-dependent RNA helicase DBP3 (532 aa).

A disordered region spans residues 1-78; it reads MGKRDRTEDD…EVAEEKPKMT (78 aa). Residues 15–58 are compositionally biased toward basic residues; it reads KKVKLDKKDKKEKKEKKDKKDKKDKKDKKDKKDKKEKKEKKEKK. Positions 126 to 152 match the Q motif motif; the sequence is MEFSHVTLDPRITKVLTKFPRPTPIQA. Residues 155–327 enclose the Helicase ATP-binding domain; that stretch reads WPYLLAGKDM…EGFMKTPTKV (173 aa). 168-175 is a binding site for ATP; sequence AETGSGKT. A DEAD box motif is present at residues 274-277; the sequence is DEAD. Residues 356 to 502 enclose the Helicase C-terminal domain; it reads RLLDLLRQYA…PVPDELLKFG (147 aa).

It belongs to the DEAD box helicase family. DDX5/DBP2 subfamily.

It localises to the nucleus. Its subcellular location is the nucleolus. It catalyses the reaction ATP + H2O = ADP + phosphate + H(+). ATP-dependent RNA helicase required for 60S ribosomal subunit synthesis. Involved in efficient pre-rRNA processing, predominantly at site A3, which is necessary for the normal formation of 25S and 5.8S rRNAs. The polypeptide is ATP-dependent RNA helicase DBP3 (DBP3) (Yarrowia lipolytica (strain CLIB 122 / E 150) (Yeast)).